Reading from the N-terminus, the 176-residue chain is ATP-dependent protease subunit HslV (176 aa).

T2 is an active-site residue. Residues G157, C160, and T163 each coordinate Na(+).

Belongs to the peptidase T1B family. HslV subfamily. A double ring-shaped homohexamer of HslV is capped on each side by a ring-shaped HslU homohexamer. The assembly of the HslU/HslV complex is dependent on binding of ATP.

Its subcellular location is the cytoplasm. It catalyses the reaction ATP-dependent cleavage of peptide bonds with broad specificity.. Allosterically activated by HslU binding. Its function is as follows. Protease subunit of a proteasome-like degradation complex believed to be a general protein degrading machinery. This chain is ATP-dependent protease subunit HslV, found in Enterobacter sp. (strain 638).